Here is a 549-residue protein sequence, read N- to C-terminus: Calcium-dependent protein kinase 5 (549 aa).

Residue Gly-2 is the site of N-myristoyl glycine attachment. The interval 43–69 is disordered; sequence DEPAGKKAPRGSAAAADAPHAASMKRG. Low complexity predominate over residues 52 to 64; the sequence is RGSAAAADAPHAA. A Protein kinase domain is found at 92-350; the sequence is YALGRKLGQG…AHEVLCHPWI (259 aa). ATP-binding positions include 98-106 and Lys-121; that span reads LGQGQFGTT. The active-site Proton acceptor is Asp-216. Residues 356–386 form an autoinhibitory domain region; that stretch reads APDRPLDPAVLSRIKQFSAMNKLKKMALRVI. EF-hand domains follow at residues 393-428, 429-464, 465-500, and 501-534; these read EEIA…YGST, LKDT…LNKL, EREE…HNMP, and DAFL…GNMG. The Ca(2+) site is built by Asp-406, Asp-408, Ser-410, Glu-417, Asp-442, Asp-444, Ser-446, Thr-448, Glu-453, Asp-478, Asp-480, Ser-482, Tyr-484, Glu-489, Asp-512, Asp-514, Asp-516, Arg-518, and Glu-523.

It belongs to the protein kinase superfamily. Ser/Thr protein kinase family. CDPK subfamily.

It localises to the membrane. The enzyme catalyses L-seryl-[protein] + ATP = O-phospho-L-seryl-[protein] + ADP + H(+). The catalysed reaction is L-threonyl-[protein] + ATP = O-phospho-L-threonyl-[protein] + ADP + H(+). With respect to regulation, activated by calcium. Autophosphorylation may play an important role in the regulation of the kinase activity. May play a role in signal transduction pathways that involve calcium as a second messenger. This is Calcium-dependent protein kinase 5 from Oryza sativa subsp. japonica (Rice).